A 483-amino-acid chain; its full sequence is Aspartyl/glutamyl-tRNA(Asn/Gln) amidotransferase subunit B (483 aa).

The protein belongs to the GatB/GatE family. GatB subfamily. In terms of assembly, heterotrimer of A, B and C subunits.

The catalysed reaction is L-glutamyl-tRNA(Gln) + L-glutamine + ATP + H2O = L-glutaminyl-tRNA(Gln) + L-glutamate + ADP + phosphate + H(+). It carries out the reaction L-aspartyl-tRNA(Asn) + L-glutamine + ATP + H2O = L-asparaginyl-tRNA(Asn) + L-glutamate + ADP + phosphate + 2 H(+). Its function is as follows. Allows the formation of correctly charged Asn-tRNA(Asn) or Gln-tRNA(Gln) through the transamidation of misacylated Asp-tRNA(Asn) or Glu-tRNA(Gln) in organisms which lack either or both of asparaginyl-tRNA or glutaminyl-tRNA synthetases. The reaction takes place in the presence of glutamine and ATP through an activated phospho-Asp-tRNA(Asn) or phospho-Glu-tRNA(Gln). The polypeptide is Aspartyl/glutamyl-tRNA(Asn/Gln) amidotransferase subunit B (Brachyspira hyodysenteriae (strain ATCC 49526 / WA1)).